Here is a 496-residue protein sequence, read N- to C-terminus: Squalene epoxidase ERG1 (496 aa).

A helical membrane pass occupies residues 4–24 (VKYDAIIIGAGVIGPTIATAF). FAD contacts are provided by residues 15–16 (VI), 35–36 (ER), Arg-43, Arg-148, Val-164, Asp-332, and Met-345. 2 consecutive transmembrane segments (helical) span residues 431–451 (IGLL…FFSV) and 466–486 (LGFP…IVIF).

Belongs to the squalene monooxygenase family. It depends on FAD as a cofactor.

It is found in the microsome membrane. The protein localises to the endoplasmic reticulum membrane. It catalyses the reaction squalene + reduced [NADPH--hemoprotein reductase] + O2 = (S)-2,3-epoxysqualene + oxidized [NADPH--hemoprotein reductase] + H2O + H(+). It functions in the pathway terpene metabolism; lanosterol biosynthesis; lanosterol from farnesyl diphosphate: step 2/3. With respect to regulation, activity is completely abolished by Triton X-100, deoxycholate or Cu(2+), and partially inhibited by thiol reagents, rotenone and antimycin A. The allylamine antimycotic agents naftifine and SF 86-327are potent inhibitors and show apparently non-competitive kinetics with respect to the substrate squalene. Its function is as follows. Squalene epoxidase; part of the third module of ergosterol biosynthesis pathway that includes the late steps of the pathway. Erg1 catalyzes the epoxidation of squalene into 2,3-epoxysqualene. The third module or late pathway involves the ergosterol synthesis itself through consecutive reactions that mainly occur in the endoplasmic reticulum (ER) membrane. Firstly, the squalene synthase ERG9 catalyzes the condensation of 2 farnesyl pyrophosphate moieties to form squalene, which is the precursor of all steroids. Squalene synthase is crucial for balancing the incorporation of farnesyl diphosphate (FPP) into sterol and nonsterol isoprene synthesis. Secondly, the squalene epoxidase ERG1 catalyzes the stereospecific oxidation of squalene to (S)-2,3-epoxysqualene, which is considered to be a rate-limiting enzyme in steroid biosynthesis. Then, the lanosterol synthase ERG7 catalyzes the cyclization of (S)-2,3 oxidosqualene to lanosterol, a reaction that forms the sterol core. In the next steps, lanosterol is transformed to zymosterol through a complex process involving various demethylation, reduction and desaturation reactions. The lanosterol 14-alpha-demethylase ERG11 (also known as CYP51) catalyzes C14-demethylation of lanosterol to produce 4,4'-dimethyl cholesta-8,14,24-triene-3-beta-ol, which is critical for ergosterol biosynthesis. The C-14 reductase ERG24 reduces the C14=C15 double bond of 4,4-dimethyl-cholesta-8,14,24-trienol to produce 4,4-dimethyl-cholesta-8,24-dienol. 4,4-dimethyl-cholesta-8,24-dienol is substrate of the C-4 demethylation complex ERG25-ERG26-ERG27 in which ERG25 catalyzes the three-step monooxygenation required for the demethylation of 4,4-dimethyl and 4alpha-methylsterols, ERG26 catalyzes the oxidative decarboxylation that results in a reduction of the 3-beta-hydroxy group at the C-3 carbon to an oxo group, and ERG27 is responsible for the reduction of the keto group on the C-3. ERG28 has a role as a scaffold to help anchor ERG25, ERG26 and ERG27 to the endoplasmic reticulum and ERG29 regulates the activity of the iron-containing C4-methylsterol oxidase ERG25. Then, the sterol 24-C-methyltransferase ERG6 catalyzes the methyl transfer from S-adenosyl-methionine to the C-24 of zymosterol to form fecosterol. The C-8 sterol isomerase ERG2 catalyzes the reaction which results in unsaturation at C-7 in the B ring of sterols and thus converts fecosterol to episterol. The sterol-C5-desaturase ERG3 then catalyzes the introduction of a C-5 double bond in the B ring to produce 5-dehydroepisterol. The C-22 sterol desaturase ERG5 further converts 5-dehydroepisterol into ergosta-5,7,22,24(28)-tetraen-3beta-ol by forming the C-22(23) double bond in the sterol side chain. Finally, ergosta-5,7,22,24(28)-tetraen-3beta-ol is substrate of the C-24(28) sterol reductase ERG4 to produce ergosterol. This Candida albicans (strain SC5314 / ATCC MYA-2876) (Yeast) protein is Squalene epoxidase ERG1.